Here is a 247-residue protein sequence, read N- to C-terminus: Probable transcriptional regulatory protein YebC (247 aa).

Residues 1 to 20 (MAGHSKWANTRHRKAAQDAK) form a disordered region.

Belongs to the TACO1 family.

The protein resides in the cytoplasm. This Salmonella arizonae (strain ATCC BAA-731 / CDC346-86 / RSK2980) protein is Probable transcriptional regulatory protein YebC.